Consider the following 207-residue polypeptide: Outer-membrane lipoprotein LolB (207 aa).

Residues Met-1–Ser-26 form the signal peptide. A lipid anchor (N-palmitoyl cysteine) is attached at Cys-27. The S-diacylglycerol cysteine moiety is linked to residue Cys-27.

It belongs to the LolB family. As to quaternary structure, monomer.

The protein resides in the cell outer membrane. Functionally, plays a critical role in the incorporation of lipoproteins in the outer membrane after they are released by the LolA protein. This is Outer-membrane lipoprotein LolB from Francisella tularensis subsp. tularensis (strain FSC 198).